We begin with the raw amino-acid sequence, 51 residues long: DNA-directed RNA polymerase subunit Rpo12 (51 aa).

Positions 14, 29, and 32 each coordinate Zn(2+).

It belongs to the archaeal Rpo12/eukaryotic RPC10 RNA polymerase subunit family. Part of the RNA polymerase complex. Requires Zn(2+) as cofactor.

It is found in the cytoplasm. The enzyme catalyses RNA(n) + a ribonucleoside 5'-triphosphate = RNA(n+1) + diphosphate. In terms of biological role, DNA-dependent RNA polymerase (RNAP) catalyzes the transcription of DNA into RNA using the four ribonucleoside triphosphates as substrates. This is DNA-directed RNA polymerase subunit Rpo12 from Methanopyrus kandleri (strain AV19 / DSM 6324 / JCM 9639 / NBRC 100938).